The chain runs to 278 residues: Putative protein-disulfide oxidoreductase RF_0032 (278 aa).

A signal peptide spans 1 to 18 (MRSIFIVPIFLLFLSSCS). Residues 62-84 (VPANDNNQTDEVSTPPSQEQKNP) are disordered. The span at 65 to 81 (NDNNQTDEVSTPPSQEQ) shows a compositional bias: polar residues. In terms of domain architecture, Thioredoxin spans 77–266 (PSQEQKNPEI…ISTAVDKALE (190 aa)). An intrachain disulfide couples cysteine 119 to cysteine 122.

Belongs to the thioredoxin family. DsbA subfamily.

The protein localises to the periplasm. May be required for disulfide bond formation in some proteins. The sequence is that of Putative protein-disulfide oxidoreductase RF_0032 from Rickettsia felis (strain ATCC VR-1525 / URRWXCal2) (Rickettsia azadi).